A 325-amino-acid polypeptide reads, in one-letter code: Outer spore wall protein LDS1 (325 aa).

Topologically, residues 1–91 (MSFTGSLALA…NTNKSSYSTT (91 aa)) are cytoplasmic. The chain crosses the membrane as a helical span at residues 92–112 (MLGILSSYLIMFALVSFVYWA). Over 113 to 118 (TITPMY) the chain is Extracellular. Residues 119-139 (TAFLIVLGPIGLFIAIFHSFL) traverse the membrane as a helical segment. The Cytoplasmic segment spans residues 140-208 (QANVFTLLFM…VKYMLGLSVL (69 aa)). Residues 209-229 (FVLLVISFFPLIGPILFHILI) traverse the membrane as a helical segment. Topologically, residues 230–263 (SPFITQIYFTKVLRLQNFDNIQRRENIYLHAGQY) are extracellular. Residues 264–284 (ASFGFLAGLIESVPILAGFAI) form a helical membrane-spanning segment. The Cytoplasmic portion of the chain corresponds to 285-325 (STNTIGSVLFNLDHPMVPENLVETQAEIEAAPQDINQQPNQ).

It belongs to the LDS family.

The protein localises to the prospore membrane. The protein resides in the lipid droplet. Its subcellular location is the spore wall. Its function is as follows. Involved in spore wall assembly. The chain is Outer spore wall protein LDS1 from Saccharomyces cerevisiae (strain ATCC 204508 / S288c) (Baker's yeast).